A 428-amino-acid polypeptide reads, in one-letter code: Chaperone SurA (428 aa).

The N-terminal stretch at 1–19 is a signal peptide; the sequence is MNIWKTLLLGMLVTGSAVS. PpiC domains follow at residues 170 to 268 and 277 to 377; these read SVEY…KIED and VTEV…EVLD.

It localises to the periplasm. The catalysed reaction is [protein]-peptidylproline (omega=180) = [protein]-peptidylproline (omega=0). In terms of biological role, chaperone involved in the correct folding and assembly of outer membrane proteins. Recognizes specific patterns of aromatic residues and the orientation of their side chains, which are found more frequently in integral outer membrane proteins. May act in both early periplasmic and late outer membrane-associated steps of protein maturation. This Vibrio vulnificus (strain CMCP6) protein is Chaperone SurA.